The following is a 111-amino-acid chain: Large ribosomal subunit protein eL42 (111 aa).

C12, C15, C72, and C77 together coordinate Zn(2+).

This sequence belongs to the eukaryotic ribosomal protein eL42 family. In terms of assembly, component of the large ribosomal subunit.

It is found in the cytoplasm. Its function is as follows. Component of the large ribosomal subunit. The ribosome is a large ribonucleoprotein complex responsible for the synthesis of proteins in the cell. This chain is Large ribosomal subunit protein eL42 (RPL36A), found in Oryctolagus cuniculus (Rabbit).